Reading from the N-terminus, the 531-residue chain is T-complex protein 1 subunit zeta (531 aa).

Ala2 carries the N-acetylalanine modification. Lys5 bears the N6-acetyllysine mark. An ADP-binding site is contributed by Gly39. Gly39 serves as a coordination point for ATP. Asp90 contributes to the Mg(2+) binding site. The ADP site is built by Gly91, Thr92, Thr93, Ser94, Thr158, and Lys159. Positions 91, 92, and 93 each coordinate ATP. Lys199 carries the N6-acetyllysine modification. The residue at position 205 (Ser205) is a Phosphoserine. A Glycyl lysine isopeptide (Lys-Gly) (interchain with G-Cter in SUMO2) cross-link involves residue Lys251. An N6-acetyllysine mark is found at Lys287, Lys365, Lys377, and Lys388. Residue Ala411 participates in ADP binding. Ala411, Gly412, Asp496, and Lys501 together coordinate ATP. Asp496 contributes to the ADP binding site.

The protein belongs to the TCP-1 chaperonin family. Component of the chaperonin-containing T-complex (TRiC), a hexadecamer composed of two identical back-to-back stacked rings enclosing a protein folding chamber. Each ring is made up of eight different subunits: TCP1/CCT1, CCT2, CCT3, CCT4, CCT5, CCT6A/CCT6, CCT7, CCT8. Interacts with PACRG.

Its subcellular location is the cytoplasm. It catalyses the reaction ATP + H2O = ADP + phosphate + H(+). Functionally, component of the chaperonin-containing T-complex (TRiC), a molecular chaperone complex that assists the folding of actin, tubulin and other proteins upon ATP hydrolysis. The TRiC complex mediates the folding of WRAP53/TCAB1, thereby regulating telomere maintenance. The polypeptide is T-complex protein 1 subunit zeta (CCT6) (Pongo abelii (Sumatran orangutan)).